Reading from the N-terminus, the 331-residue chain is Probable allantoicase (331 aa).

The protein belongs to the allantoicase family.

The enzyme catalyses allantoate + H2O = (S)-ureidoglycolate + urea. It functions in the pathway nitrogen metabolism; (S)-allantoin degradation; (S)-ureidoglycolate from allantoate (aminidohydrolase route): step 1/1. This Pseudomonas fluorescens (strain ATCC BAA-477 / NRRL B-23932 / Pf-5) protein is Probable allantoicase.